Here is a 731-residue protein sequence, read N- to C-terminus: 1,4-alpha-glucan branching enzyme GlgB (731 aa).

Aspartate 411 serves as the catalytic Nucleophile. Glutamate 464 (proton donor) is an active-site residue.

It belongs to the glycosyl hydrolase 13 family. GlgB subfamily. Monomer.

The catalysed reaction is Transfers a segment of a (1-&gt;4)-alpha-D-glucan chain to a primary hydroxy group in a similar glucan chain.. It participates in glycan biosynthesis; glycogen biosynthesis. Functionally, catalyzes the formation of the alpha-1,6-glucosidic linkages in glycogen by scission of a 1,4-alpha-linked oligosaccharide from growing alpha-1,4-glucan chains and the subsequent attachment of the oligosaccharide to the alpha-1,6 position. The polypeptide is 1,4-alpha-glucan branching enzyme GlgB (Mycolicibacterium paratuberculosis (strain ATCC BAA-968 / K-10) (Mycobacterium paratuberculosis)).